A 434-amino-acid polypeptide reads, in one-letter code: MFS-type transporter AFUA_1G00970 (434 aa).

A run of 12 helical transmembrane segments spans residues 21–41 (VIGG…FGVF), 60–80 (WIGS…GVLV), 87–107 (VLLI…SLCS), 112–132 (IFLA…WPPF), 145–165 (LALG…SIMI), 182–202 (VLGF…TEPP), 240–260 (VFIS…NPFF), 278–298 (YMIS…GIVA), 301–321 (VGHY…SFCW), 327–347 (LTGL…ILSL), 364–384 (AIGF…PIGG), and 393–413 (LSLS…MGYA). The tract at residues 201 to 225 (PPKQSQPQPRPALEATVEGGSASPT) is disordered.

The protein belongs to the major facilitator superfamily. Monocarboxylate porter (TC 2.A.1.13) family.

It localises to the cell membrane. In terms of biological role, MFS-type transporter; part of the gene cluster that mediates the biosynthesis of fumigermin that inhibits germination of spores of the inducing S.rapamycinicus, and thus helps the fungus to defend resources in the shared habitat against a bacterial competitor. May be involved in the secretion of fumigermin. This Aspergillus fumigatus (strain ATCC MYA-4609 / CBS 101355 / FGSC A1100 / Af293) (Neosartorya fumigata) protein is MFS-type transporter AFUA_1G00970.